The primary structure comprises 73 residues: Large ribosomal subunit protein bL31 (73 aa).

Residues 34 to 43 show a composition bias toward basic and acidic residues; it reads KMNLDIDPKS. Residues 34–54 are disordered; the sequence is KMNLDIDPKSHPAWTGGTQQM.

This sequence belongs to the bacterial ribosomal protein bL31 family. Type A subfamily. As to quaternary structure, part of the 50S ribosomal subunit.

Functionally, binds the 23S rRNA. This chain is Large ribosomal subunit protein bL31, found in Rhodopseudomonas palustris (strain BisA53).